We begin with the raw amino-acid sequence, 149 residues long: Detocs response regulatory protein DtcB (149 aa).

Residues methionine 1–asparagine 134 enclose the Response regulatory domain. Residue aspartate 53 is modified to 4-aspartylphosphate.

Post-translationally, probably phosphorylated by DtcA.

In terms of biological role, possible phosphate scavenger member of the two-component regulatory system Detocs that confers resistance to bacteriophage. When the system (DtcA-DtcB-DtcC) is expressed in a susceptible E.coli (strain MG1655) it confers resistance to bacteriophages T2, T4, T5, T6 and SECphi27. Detocs inhibits T5 infection leading to growth arrest but not complete cell lysis, during SECphi27 infection leads to cell lysis. Overexpression of this protein along with the intact Detocs locus cancels T5 immunity; when the phosphate-receiving Asp-53 is mutated to Ala in this protein, immunity is restored. DtcA probably autophosphorylates upon sensing viral infection, and subsequently transfers the phosphate signal to DtcC which activates it, leading to an antiviral defense; DtcB (this subunit) may scavenge phosphorylation signals from accidental activation of DtcA. The protein is Detocs response regulatory protein DtcB of Vibrio alginolyticus.